Reading from the N-terminus, the 183-residue chain is Protein jagunal homolog 1 (183 aa).

The Cytoplasmic portion of the chain corresponds to 1 to 39 (MASRAGPRAAGTDGSDFQHRERVAMHYQMSVTLKYEIKK). Position 3 is a phosphoserine (Ser-3). A helical membrane pass occupies residues 40-60 (LIYVHLVIWLLLVAKMSVGHL). Residues 61–71 (RLLSHDQVAMP) lie on the Lumenal side of the membrane. The helical transmembrane segment at 72 to 92 (YQWEYPYLLSVVPSLLGLLSF) threads the bilayer. Over 93–96 (PRNN) the chain is Cytoplasmic. A helical membrane pass occupies residues 97–117 (ISYLVLSMISMGLFSIAPLIY). Over 118-137 (GSMEMFPAAQQLYRHGKAYR) the chain is Lumenal. The helical transmembrane segment at 138-158 (FLFGFSAVSVMYLVLVLAVQV) threads the bilayer. The Cytoplasmic segment spans residues 159-183 (HAWQLYYSKKLLDSWFTSTQEKKRK).

Belongs to the jagunal family. Interacts with COPA, COPB2 and COPG2.

It is found in the endoplasmic reticulum membrane. Functionally, endoplasmic reticulum transmembrane protein involved in vesicle-mediated transport, which is required for neutrophil function. Required for vesicle-mediated transport; it is however unclear whether it is involved in early secretory pathway or intracellular protein transport. Acts as a regulator of neutrophil function, probably via its role in vesicle-mediated transport: required for defense against fungal pathogens and for granulocyte colony-stimulating factor (GM-CSF) signaling pathway; possibly by regulating glycosylation and/or targeting of proteins contributing to the viability and migration of neutrophils. The protein is Protein jagunal homolog 1 (JAGN1) of Bos taurus (Bovine).